The sequence spans 349 residues: Mitogen-activated protein kinase sty1 (349 aa).

A Protein kinase domain is found at tyrosine 20 to leucine 299. ATP contacts are provided by residues isoleucine 26–valine 34 and lysine 49. The Proton acceptor role is filled by aspartate 141. At threonine 171 the chain carries Phosphothreonine. The short motif at threonine 171–tyrosine 173 is the TXY element. Position 173 is a phosphotyrosine (tyrosine 173). Serine 175 carries the phosphoserine modification. Threonine 176 is modified (phosphothreonine). A TXY motif is present at residues threonine 176 to tyrosine 178.

It belongs to the protein kinase superfamily. Ser/Thr protein kinase family. MAP kinase subfamily. HOG1 sub-subfamily. Interacts with cdc37, cmk2, hal4, sin1 and srk1. Mg(2+) serves as cofactor. Dually phosphorylated on Thr-171 and Tyr-173, which activates the enzyme. Phosphorylated by wis1 in response to osmotic stress, nutrient limitation, hydrogen peroxide and arsenite. Dephosphorylated by pyp1 and pyp2.

It is found in the cytoplasm. The protein resides in the nucleus. It carries out the reaction L-seryl-[protein] + ATP = O-phospho-L-seryl-[protein] + ADP + H(+). The catalysed reaction is L-threonyl-[protein] + ATP = O-phospho-L-threonyl-[protein] + ADP + H(+). With respect to regulation, activated by the MAPK kinase wisl, and negatively regulated by pypl and pyp2 tyrosine phosphatases. Functionally, proline-directed serine/threonine-protein kinase involved in a signal transduction pathway that is activated by changes in the osmolarity of the extracellular environment. Controls osmotic regulation of transcription of target genes. Involved in osmoregulation and stress response pathways leading to an efficient start of sexual differentiation. Supports translation initiation and facilitates adaptation to environmental stress in part through reducing eIF2-alpha phosphorylation. Links the cell-cycle G2/M control with changes in the extracellular environment that affect cell physiology. Phosphorylates atf1 and mkp1. In conjunction with hal4, has a role in the cellular resistance to toxic cations such as Na(+), Li(+) and Ca(2+). Involved in resistance to arsenite, methylglyoxal and hydrogen peroxide. Involved in induction of thermotolerance in mRNA export, as well as in vacuolar fission. The protein is Mitogen-activated protein kinase sty1 (sty1) of Schizosaccharomyces pombe (strain 972 / ATCC 24843) (Fission yeast).